Consider the following 341-residue polypeptide: tRNA N6-adenosine threonylcarbamoyltransferase (341 aa).

2 residues coordinate Fe cation: histidine 111 and histidine 115. Substrate contacts are provided by residues 134–138 (LVSGG), aspartate 167, glycine 180, and asparagine 276. Fe cation is bound at residue aspartate 304.

This sequence belongs to the KAE1 / TsaD family. The cofactor is Fe(2+).

Its subcellular location is the cytoplasm. It carries out the reaction L-threonylcarbamoyladenylate + adenosine(37) in tRNA = N(6)-L-threonylcarbamoyladenosine(37) in tRNA + AMP + H(+). Required for the formation of a threonylcarbamoyl group on adenosine at position 37 (t(6)A37) in tRNAs that read codons beginning with adenine. Is involved in the transfer of the threonylcarbamoyl moiety of threonylcarbamoyl-AMP (TC-AMP) to the N6 group of A37, together with TsaE and TsaB. TsaD likely plays a direct catalytic role in this reaction. In Pseudomonas putida (strain W619), this protein is tRNA N6-adenosine threonylcarbamoyltransferase.